We begin with the raw amino-acid sequence, 469 residues long: Aspartyl/glutamyl-tRNA(Asn/Gln) amidotransferase subunit B (469 aa).

It belongs to the GatB/GatE family. GatB subfamily. Heterotrimer of A, B and C subunits.

The enzyme catalyses L-glutamyl-tRNA(Gln) + L-glutamine + ATP + H2O = L-glutaminyl-tRNA(Gln) + L-glutamate + ADP + phosphate + H(+). It carries out the reaction L-aspartyl-tRNA(Asn) + L-glutamine + ATP + H2O = L-asparaginyl-tRNA(Asn) + L-glutamate + ADP + phosphate + 2 H(+). Allows the formation of correctly charged Asn-tRNA(Asn) or Gln-tRNA(Gln) through the transamidation of misacylated Asp-tRNA(Asn) or Glu-tRNA(Gln) in organisms which lack either or both of asparaginyl-tRNA or glutaminyl-tRNA synthetases. The reaction takes place in the presence of glutamine and ATP through an activated phospho-Asp-tRNA(Asn) or phospho-Glu-tRNA(Gln). The chain is Aspartyl/glutamyl-tRNA(Asn/Gln) amidotransferase subunit B from Methanococcus maripaludis (strain C7 / ATCC BAA-1331).